The following is a 644-amino-acid chain: Probable potassium transport system protein Kup (644 aa).

Helical transmembrane passes span 10–30 (GGAT…GDIG), 56–76 (ILSL…AWVI), 106–126 (WWIL…GVIT), 143–163 (PAWK…LFMV), 175–195 (FGPS…TWIV), 212–232 (FFGI…LAVT), 252–272 (AWYF…GALL), 282–302 (PFFM…SGIA), 343–363 (IYLP…ILWF), 371–391 (FAYG…VFFV), 403–423 (AGLF…ANLL), and 425–445 (FVEG…TMST).

This sequence belongs to the HAK/KUP transporter (TC 2.A.72) family.

The protein localises to the cell inner membrane. The catalysed reaction is K(+)(in) + H(+)(in) = K(+)(out) + H(+)(out). Functionally, transport of potassium into the cell. Likely operates as a K(+):H(+) symporter. In Acidithiobacillus ferrooxidans (strain ATCC 23270 / DSM 14882 / CIP 104768 / NCIMB 8455) (Ferrobacillus ferrooxidans (strain ATCC 23270)), this protein is Probable potassium transport system protein Kup.